We begin with the raw amino-acid sequence, 282 residues long: Prohibitin-1 (282 aa).

The AIM motif lies at Tyr-106–Leu-109.

This sequence belongs to the prohibitin family. As to quaternary structure, the mitochondrial prohibitin complex consists of two subunits (phb1 and phb2). The subunits assemble into a membrane-associated ring-shaped supercomplex of approximately 1 mDa.

The protein localises to the mitochondrion inner membrane. It localises to the cytoplasm. Its function is as follows. Prohibitin probably acts as a holdase/unfoldase for the stabilization of newly synthesized mitochondrial proteins. Involved in mitophagy; may act as an adapter for atg8 that supports mitophagosome assembly. Negatively regulates the proteolytic processing of atg32 via the i-AAA protease. Acts as a negative regulator of the m-AAA protease. The protein is Prohibitin-1 (phb1) of Schizosaccharomyces pombe (strain 972 / ATCC 24843) (Fission yeast).